We begin with the raw amino-acid sequence, 604 residues long: Solute carrier family 23 member 1 (604 aa).

The tract at residues 1–29 (MKAQEDPGSSKQHECPDSAGTSTRDQQAP) is disordered. The Cytoplasmic portion of the chain corresponds to 1–59 (MKAQEDPGSSKQHECPDSAGTSTRDQQAPLPAEPKFDMLYKIEDVPPWYLCILLGFQHY). A helical transmembrane segment spans residues 60 to 80 (LTCFSGTIAVPFLLAEALCVG). Residues 81–88 (RDQHMISQ) lie on the Extracellular side of the membrane. A helical transmembrane segment spans residues 89–109 (LIGTIFTCVGITTLIQTTVGI). A topological domain (cytoplasmic) is located at residue R110. A helical transmembrane segment spans residues 111 to 131 (LPLFQASAFAFLVPAKAILAL). Topologically, residues 132 to 166 (ERWKCPPEEEIYGNWSMPLNTSHIWHPRIREVQGA) are extracellular. Residues N145 and N151 are each glycosylated (N-linked (GlcNAc...) asparagine). A helical membrane pass occupies residues 167–187 (IMVSSVVEVVIGLLGLPGALL). Residues 188-214 (SYIGPLTVTPTVSLIGLSVFQAAGDRA) lie on the Cytoplasmic side of the membrane. A helical transmembrane segment spans residues 215 to 232 (GSHWGISACSILLIVLFS). Topologically, residues 233 to 236 (QYLR) are extracellular. Positions 237–250 (NLTFLLPVYRWGKG) form an intramembrane region, helical. At 251–257 (LTLFRIQ) the chain is on the extracellular side. The helical transmembrane segment at 258–278 (IFKMFPIVLAIMTVWLLCYVL) threads the bilayer. The Cytoplasmic segment spans residues 279–319 (TLTDVLPADPTVYGFQARTDARGDIMAISPWIRIPYPCQWG). Residues 320 to 340 (LPTVTVAAVLGMFSATLAGII) form a helical membrane-spanning segment. Residues 341 to 365 (ESIGDYYACARLAGAPPPPVHAINR) are Extracellular-facing. A helical transmembrane segment spans residues 366–386 (GIFTEGVCCIIAGLLGTGNGS). The Cytoplasmic segment spans residues 387–409 (TSSSPNIGVLGITKVGSRRVVQY). A helical membrane pass occupies residues 410–430 (GAGIMLILGAIGKFTALFASL). The Extracellular segment spans residues 431–433 (PDP). The helical transmembrane segment at 434–454 (ILGGMFCTLFGMITAVGLSNL) threads the bilayer. The Cytoplasmic segment spans residues 455-464 (QFVDMNSSRN). The helical transmembrane segment at 465 to 485 (LFVLGFSMFFGLTLPNYLDSN) threads the bilayer. Residues 486–497 (PGAINTGVPEVD) lie on the Extracellular side of the membrane. The chain crosses the membrane as a helical span at residues 498–518 (QILTVLLTTEMFVGGCLAFIL). Residues 519-604 (DNTVPGSPEE…TETGSVCTKV (86 aa)) are Cytoplasmic-facing. T597 is subject to Phosphothreonine. A Phosphoserine modification is found at S599. T602 bears the Phosphothreonine mark.

The protein belongs to the nucleobase:cation symporter-2 (NCS2) (TC 2.A.40) family. In terms of processing, phosphorylated. Highly expressed in the straight segment of proximal tubules in the kidney, in intestine and liver. Detected in epithelial cells of the bronchiole and epididymis.

It is found in the cell membrane. It catalyses the reaction L-ascorbate(out) + 2 Na(+)(out) = L-ascorbate(in) + 2 Na(+)(in). The enzyme catalyses urate(out) + 2 Na(+)(out) = urate(in) + 2 Na(+)(in). Sodium/ascorbate cotransporter. Mediates electrogenic uptake of vitamin C, with a stoichiometry of 2 Na(+) for each ascorbate. Has retained some ancestral activity toward nucleobases such as urate, an oxidized purine. Low-affinity high-capacity sodium:urate cotransporter, may regulate serum urate levels by serving as a renal urate re-absorber. The polypeptide is Solute carrier family 23 member 1 (Slc23a1) (Rattus norvegicus (Rat)).